Here is a 380-residue protein sequence, read N- to C-terminus: Cytochrome b (380 aa).

A run of 4 helical transmembrane segments spans residues 34–54 (FGSL…LLAM), 78–99 (WLIR…FLHI), 114–134 (WNTG…GYVL), and 179–199 (FFAL…IHLT). Heme b-binding residues include His-84 and His-98. Positions 183 and 197 each coordinate heme b. His-202 lines the a ubiquinone pocket. 4 helical membrane passes run 227-247 (LKDI…ALFS), 289-309 (LGGV…PFLH), 321-341 (LSQI…WIGS), and 348-368 (FIII…ILFP).

The protein belongs to the cytochrome b family. The cytochrome bc1 complex contains 11 subunits: 3 respiratory subunits (MT-CYB, CYC1 and UQCRFS1), 2 core proteins (UQCRC1 and UQCRC2) and 6 low-molecular weight proteins (UQCRH/QCR6, UQCRB/QCR7, UQCRQ/QCR8, UQCR10/QCR9, UQCR11/QCR10 and a cleavage product of UQCRFS1). This cytochrome bc1 complex then forms a dimer. It depends on heme b as a cofactor.

It localises to the mitochondrion inner membrane. Component of the ubiquinol-cytochrome c reductase complex (complex III or cytochrome b-c1 complex) that is part of the mitochondrial respiratory chain. The b-c1 complex mediates electron transfer from ubiquinol to cytochrome c. Contributes to the generation of a proton gradient across the mitochondrial membrane that is then used for ATP synthesis. The sequence is that of Cytochrome b (MT-CYB) from Pavo muticus (Green peafowl).